A 569-amino-acid chain; its full sequence is MKVLLRLICFIALLISSLEADKCKEREEKIILVSSANEIDVRPCPLNPNEHKGTITWYKDDSKTPVSTEQASRIHQHKEKLWFVPAKVEDSGHYYCVVRNSSYCLRIKISAKFVENEPNLCYNAQAIFKQKLPVAGDGGLVCPYMEFFKNENNELPKLQWYKDCKPLLLDNIHFSGVKDRLIVMNVAEKHRGNYTCHASYTYLGKQYPITRVIEFITLEENKPTRPVIVSPANETMEVDLGSQIQLICNVTGQLSDIAYWKWNGSVIDEDDPVLGEDYYSVENPANKRRSTLITVLNISEIESRFYKHPFTCFAKNTHGIDAAYIQLIYPVTNFQKHMIGICVTLTVIIVCSVFIYKIFKIDIVLWYRDSCYDFLPIKASDGKTYDAYILYPKTVGEGSTSDCDIFVFKVLPEVLEKQCGYKLFIYGRDDYVGEDIVEVINENVKKSRRLIIILVRETSGFSWLGGSSEEQIAMYNALVQDGIKVVLLELEKIQDYEKMPESIKFIKQKHGAIRWSGDFTQGPQSAKTRFWKNVRYHMPVQRRSPSSKHQLLSPATKEKLQREAHVPLG.

A signal peptide spans 1-17; sequence MKVLLRLICFIALLISS. Over 18-336 the chain is Extracellular; the sequence is LEADKCKERE…LIYPVTNFQK (319 aa). 4 disulfides stabilise this stretch: C23-C104, C44-C96, C121-C164, and C142-C196. Ig-like C2-type domains are found at residues 23–110, 118–210, and 226–328; these read CKER…IKIS, PNLC…YPIT, and PVIV…IQLI. Residue N100 is glycosylated (N-linked (GlcNAc...) asparagine). N-linked (GlcNAc...) asparagine glycosylation is found at N193, N233, N249, N263, and N297. C248 and C312 form a disulfide bridge. Residues 337–356 traverse the membrane as a helical segment; the sequence is HMIGICVTLTVIIVCSVFIY. Over 357–569 the chain is Cytoplasmic; sequence KIFKIDIVLW…LQREAHVPLG (213 aa). The TIR domain occupies 383 to 538; that stretch reads KTYDAYILYP…RFWKNVRYHM (156 aa). E470 is a catalytic residue. Phosphotyrosine is present on Y496. The disordered stretch occupies residues 540–569; that stretch reads VQRRSPSSKHQLLSPATKEKLQREAHVPLG. Residues 556–569 show a composition bias toward basic and acidic residues; sequence TKEKLQREAHVPLG.

The protein belongs to the interleukin-1 receptor family. As to quaternary structure, the interleukin-1 receptor complex is a heterodimer of IL1R1 and IL1RAP. Interacts with PIK3R1. Interacts with IL1A. In terms of processing, a soluble form (sIL1R1) is probably produced by proteolytic cleavage at the cell surface (shedding). Rapidly phosphorylated on Tyr-496 in response to IL-1, which creates a SH2 binding site for the PI 3-kinase regulatory subunit PIK3R1. In terms of tissue distribution, expressed in T-helper cell subsets. Preferentially expressed in T-helper 1 (Th1) cells.

The protein resides in the membrane. The protein localises to the cell membrane. It localises to the secreted. It catalyses the reaction NAD(+) + H2O = ADP-D-ribose + nicotinamide + H(+). Its function is as follows. Receptor for IL1A, IL1B and IL1RN. After binding to interleukin-1 associates with the coreceptor IL1RAP to form the high affinity interleukin-1 receptor complex which mediates interleukin-1-dependent activation of NF-kappa-B, MAPK and other pathways. Signaling involves the recruitment of adapter molecules such as TOLLIP, MYD88, and IRAK1 or IRAK2 via the respective TIR domains of the receptor/coreceptor subunits. Binds ligands with comparable affinity and binding of antagonist IL1RN prevents association with IL1RAP to form a signaling complex. Involved in IL1B-mediated costimulation of IFNG production from T-helper 1 (Th1) cells. The protein is Interleukin-1 receptor type 1 (IL1R1) of Homo sapiens (Human).